The primary structure comprises 154 residues: Superoxide dismutase [Cu-Zn] (154 aa).

Residues His47, His49, and His64 each coordinate Cu cation. Cys58 and Cys147 are disulfide-bonded. Residues His64, His72, His81, and Asp84 each contribute to the Zn(2+) site. His121 is a Cu cation binding site. Basic and acidic residues predominate over residues 125-137; it reads DDLGRGGNEESKK. The segment at 125 to 147 is disordered; it reads DDLGRGGNEESKKTGNAGPRPAC. Position 144 (Arg144) interacts with substrate.

Homodimer. Cu cation is required as a cofactor. Requires Zn(2+) as cofactor.

The protein resides in the cytoplasm. The enzyme catalyses 2 superoxide + 2 H(+) = H2O2 + O2. Its function is as follows. Destroys radicals which are normally produced within the cells and which are toxic to biological systems. In Aspergillus niger, this protein is Superoxide dismutase [Cu-Zn].